Consider the following 1711-residue polypeptide: Nuclear pore complex protein Nup214 (1711 aa).

Tandem repeats lie at residues F472–G473, F486–G487, F497–G498, F511–G512, F514–G515, F535–G536, T588–S589, and S598–L599. Residues F472–G1703 form a 45 X 2 AA repeats of F-G region. Leucine-zipper regions lie at residues L650–L672 and L767–L788. A disordered region spans residues K886–D905. Repeat unit 9 spans residues F1009 to G1010. The segment at G1012–T1081 is disordered. 2 stretches are compositionally biased toward basic and acidic residues: residues T1037 to K1051 and E1058 to N1072. Positions A1044–R1711 are interaction with emb. 8 consecutive repeat copies span residues F1075–G1076, F1077–G1078, F1097–G1098, F1106–G1107, F1135–G1136, F1218–G1219, F1229–G1230, and F1240–G1241. The span at T1251–D1261 shows a compositional bias: polar residues. A disordered region spans residues T1251–I1270. A run of 27 repeats spans residues F1356 to G1357, F1388 to G1389, F1399 to G1400, F1434 to G1435, F1449 to G1450, F1458 to G1459, F1472 to G1473, F1481 to G1482, F1487 to G1488, F1507 to G1508, F1512 to G1513, F1539 to G1540, F1547 to G1548, F1562 to G1563, F1571 to G1572, F1584 to G1585, F1588 to G1589, F1601 to G1602, F1617 to G1618, F1623 to G1624, F1629 to G1630, F1635 to G1636, F1641 to G1642, F1647 to G1648, F1650 to G1651, F1662 to G1663, and F1686 to G1687. Disordered regions lie at residues S1533–T1552 and S1557–P1614. Composition is skewed to gly residues over residues S1560–G1572 and G1582–S1595. Positions V1596–P1614 are enriched in low complexity. Positions N1688–Q1698 are enriched in polar residues. A disordered region spans residues N1688–R1711. Repeat unit 45 spans residues F1702–G1703.

In terms of assembly, component of the nuclear pore complex. Interacts with mbo/Nup88 and (via C-terminus) with emb to attenuate emb-mediated protein export.

The protein resides in the nucleus. It is found in the nuclear pore complex. It localises to the nucleus membrane. In terms of biological role, part of the nuclear pore complex. Serves as a docking site in the receptor-mediated import of substrates across the nuclear pore complex including emb, RanGAP and phosphorylated Mad. Protects mbo/Nup88 from proteasomal degradation at the nuclear pore. Together with mbo/Nup88, sequesters emb in the cytoplasm and thereby attenuates nuclear export signal (NES)-mediated nuclear export. Together with mbo/Nup88, required for the nuclear import of the Rel family transcription factors dorsal (dl) and Dorsal-related immunity factor (Dif) and the activation of an immune response. The chain is Nuclear pore complex protein Nup214 from Drosophila melanogaster (Fruit fly).